We begin with the raw amino-acid sequence, 432 residues long: Transcriptional adapter 3-B (432 aa).

2 disordered regions span residues His90 to Arg124 and Ser275 to Glu315. The span at Asp293–Pro305 shows a compositional bias: polar residues. A coiled-coil region spans residues Ala335–Ile398.

It belongs to the NGG1 family.

Its subcellular location is the nucleus. In terms of biological role, functions as a component of the PCAF complex. The PCAF complex is capable of efficiently acetylating histones in a nucleosomal context. The sequence is that of Transcriptional adapter 3-B (tada3-b) from Xenopus laevis (African clawed frog).